Here is a 471-residue protein sequence, read N- to C-terminus: Kynurenine 3-monooxygenase (471 aa).

FAD is bound by residues Val-19, 37-40, and Ala-57; that span reads YESR. The L-kynurenine site is built by Arg-85 and Tyr-99. FAD-binding positions include Arg-111, Leu-136, Thr-172, Asp-304, and 317–318; that span reads MN. L-kynurenine-binding residues include Asn-363 and Tyr-398. A run of 2 helical transmembrane segments spans residues 385 to 404 and 425 to 445; these read CLHTLMPSTFIPLYTMVTFS and ALFFFGTLVALSTTYLLTGPT.

The protein belongs to the aromatic-ring hydroxylase family. KMO subfamily. Requires FAD as cofactor.

Its subcellular location is the mitochondrion outer membrane. The enzyme catalyses L-kynurenine + NADPH + O2 + H(+) = 3-hydroxy-L-kynurenine + NADP(+) + H2O. It functions in the pathway cofactor biosynthesis; NAD(+) biosynthesis; quinolinate from L-kynurenine: step 1/3. Catalyzes the hydroxylation of L-kynurenine (L-Kyn) to form 3-hydroxy-L-kynurenine (L-3OHKyn). Required for synthesis of quinolinic acid, a neurotoxic NMDA receptor antagonist and potential endogenous inhibitor of NMDA receptor signaling in axonal targeting, synaptogenesis and apoptosis during brain development. Quinolinic acid may also affect NMDA receptor signaling in pancreatic beta cells, osteoblasts, myocardial cells, and the gastrointestinal tract. The chain is Kynurenine 3-monooxygenase from Sus scrofa (Pig).